The following is a 100-amino-acid chain: Small ribosomal subunit protein uS14c (100 aa).

It belongs to the universal ribosomal protein uS14 family. In terms of assembly, part of the 30S ribosomal subunit.

It localises to the plastid. The protein localises to the chloroplast. Its function is as follows. Binds 16S rRNA, required for the assembly of 30S particles. This Adiantum capillus-veneris (Maidenhair fern) protein is Small ribosomal subunit protein uS14c.